The primary structure comprises 737 residues: Catalase-peroxidase (737 aa).

The signal sequence occupies residues methionine 1–alanine 23. Positions tryptophan 102–tyrosine 223 form a cross-link, tryptophyl-tyrosyl-methioninium (Trp-Tyr) (with M-249). Histidine 103 (proton acceptor) is an active-site residue. The segment at residues tyrosine 223–methionine 249 is a cross-link (tryptophyl-tyrosyl-methioninium (Tyr-Met) (with W-102)). Heme b is bound at residue histidine 264.

Belongs to the peroxidase family. Peroxidase/catalase subfamily. As to quaternary structure, homodimer or homotetramer. Requires heme b as cofactor. In terms of processing, formation of the three residue Trp-Tyr-Met cross-link is important for the catalase, but not the peroxidase activity of the enzyme.

It carries out the reaction H2O2 + AH2 = A + 2 H2O. It catalyses the reaction 2 H2O2 = O2 + 2 H2O. In terms of biological role, bifunctional enzyme with both catalase and broad-spectrum peroxidase activity. The sequence is that of Catalase-peroxidase from Yersinia pseudotuberculosis serotype I (strain IP32953).